The chain runs to 156 residues: MKKIYVAGGCFWGVQGFLKTIKGIKKTTVGYANSLLENPTYELVKSHVTDAVETVEVIYDENILSLKDIVKKLFAVIDPTARNYQGPDHGRQYRNGFYFVDQEDGVMLRELMLEFSKKYEKPLATEILPLDNYYLAEDYHQDYFDKHPNAVCHIKF.

Cys-10 is an active-site residue.

The protein belongs to the MsrA Met sulfoxide reductase family.

The catalysed reaction is L-methionyl-[protein] + [thioredoxin]-disulfide + H2O = L-methionyl-(S)-S-oxide-[protein] + [thioredoxin]-dithiol. It carries out the reaction [thioredoxin]-disulfide + L-methionine + H2O = L-methionine (S)-S-oxide + [thioredoxin]-dithiol. In terms of biological role, has an important function as a repair enzyme for proteins that have been inactivated by oxidation. Catalyzes the reversible oxidation-reduction of methionine sulfoxide in proteins to methionine. This Metamycoplasma arthritidis (strain 158L3-1) (Mycoplasma arthritidis) protein is Peptide methionine sulfoxide reductase MsrA.